Reading from the N-terminus, the 255-residue chain is MATIGALVLRFFFIAVLMSSQKSWAIKEEHTIIQAEFYLLPDKRGEFMFDFDGDEIFHVDIEKSETIWRLEEFAKFASFEAQGALANIAVDKANLDVMKERSNNTPDANVAPEVTVLSRSPVNLGEPNILICFIDKFSPPVVNVTWLRNGRPVTEGVSETVFLPRDDHLFRKFHYLTFLPSTDDFYDCEVDHWGLEEPLRKHWEFEEKTLLPETKENVVCALGLFVGLVGIVVGIILIMKGIKKRNVVERRQGAL.

Residues 1 to 25 (MATIGALVLRFFFIAVLMSSQKSWA) form the signal peptide. Positions 26-109 (IKEEHTIIQA…ERSNNTPDAN (84 aa)) are alpha-1. Over 26–216 (IKEEHTIIQA…EKTLLPETKE (191 aa)) the chain is Extracellular. An alpha-2 region spans residues 110 to 203 (VAPEVTVLSR…GLEEPLRKHW (94 aa)). An Ig-like C1-type domain is found at 112–204 (PEVTVLSRSP…LEEPLRKHWE (93 aa)). Cysteines 132 and 188 form a disulfide. Asparagine 143 carries an N-linked (GlcNAc...) asparagine glycan. The interval 204-216 (EFEEKTLLPETKE) is connecting peptide. The helical transmembrane segment at 217-242 (NVVCALGLFVGLVGIVVGIILIMKGI) threads the bilayer. At 243-255 (KKRNVVERRQGAL) the chain is on the cytoplasmic side.

This sequence belongs to the MHC class II family.

It localises to the membrane. This Mus musculus (Mouse) protein is H-2 class II histocompatibility antigen, E-K alpha chain.